The sequence spans 201 residues: Large ribosomal subunit protein uL4 (201 aa).

A disordered region spans residues 45–75 (AQKSRSEVSGSGKKPWRQKGTGRARSGSLRS).

The protein belongs to the universal ribosomal protein uL4 family. As to quaternary structure, part of the 50S ribosomal subunit.

Its function is as follows. One of the primary rRNA binding proteins, this protein initially binds near the 5'-end of the 23S rRNA. It is important during the early stages of 50S assembly. It makes multiple contacts with different domains of the 23S rRNA in the assembled 50S subunit and ribosome. In terms of biological role, forms part of the polypeptide exit tunnel. This is Large ribosomal subunit protein uL4 from Buchnera aphidicola subsp. Cinara cedri (strain Cc).